A 386-amino-acid polypeptide reads, in one-letter code: Ribonucleoside-diphosphate reductase subunit M2 (386 aa).

Residues 1–24 show a composition bias toward polar residues; the sequence is MSSTRSPLKTKNENTISTKMNNMS. The segment at 1–36 is disordered; sequence MSSTRSPLKTKNENTISTKMNNMSFVDKENTPPSLS. Phosphoserine is present on serine 6. Position 31 is a phosphothreonine (threonine 31). Fe cation is bound by residues aspartate 135, glutamate 166, and histidine 169. Residue tyrosine 173 is part of the active site. Fe cation-binding residues include glutamate 229, glutamate 263, and histidine 266.

The protein belongs to the ribonucleoside diphosphate reductase small chain family. Heterodimer of a large and a small subunit. Fe cation serves as cofactor.

It is found in the cytoplasm. It carries out the reaction a 2'-deoxyribonucleoside 5'-diphosphate + [thioredoxin]-disulfide + H2O = a ribonucleoside 5'-diphosphate + [thioredoxin]-dithiol. Provides the precursors necessary for DNA synthesis. Catalyzes the biosynthesis of deoxyribonucleotides from the corresponding ribonucleotides. This chain is Ribonucleoside-diphosphate reductase subunit M2 (rrm2), found in Danio rerio (Zebrafish).